The chain runs to 1606 residues: Pentafunctional AROM polypeptide (1606 aa).

The interval 1–390 (MANADVLKVS…YEPKATVVPD (390 aa)) is 3-dehydroquinate synthase. NAD(+)-binding positions include 45 to 47 (DTN), 85 to 88 (ETSK), 116 to 118 (GGV), and aspartate 121. 7-phospho-2-dehydro-3-deoxy-D-arabino-heptonate is bound at residue arginine 132. 141-142 (TT) contributes to the NAD(+) binding site. 7-phospho-2-dehydro-3-deoxy-D-arabino-heptonate contacts are provided by aspartate 148 and lysine 154. Lysine 163 contacts NAD(+). Asparagine 164 provides a ligand contact to 7-phospho-2-dehydro-3-deoxy-D-arabino-heptonate. NAD(+)-binding positions include 181–184 (FLET) and asparagine 192. Glutamate 196 is a binding site for Zn(2+). 7-phospho-2-dehydro-3-deoxy-D-arabino-heptonate-binding positions include 196–199 (EVVK) and lysine 256. Glutamate 266 serves as the catalytic Proton acceptor; for 3-dehydroquinate synthase activity. 7-phospho-2-dehydro-3-deoxy-D-arabino-heptonate contacts are provided by residues 270–274 (RNLVN) and histidine 277. Zn(2+) is bound at residue histidine 277. Histidine 281 serves as the catalytic Proton acceptor; for 3-dehydroquinate synthase activity. Residues histidine 293 and lysine 362 each coordinate 7-phospho-2-dehydro-3-deoxy-D-arabino-heptonate. Histidine 293 provides a ligand contact to Zn(2+). The EPSP synthase stretch occupies residues 403-850 (VIPGVPRHHP…WDDLENKIGL (448 aa)). Catalysis depends on cysteine 832, which acts as the For EPSP synthase activity. A shikimate kinase region spans residues 875 to 1070 (AASIILIGMR…TSGRRSYFLC (196 aa)). 882–889 (GMRGTGKT) contacts ATP. A 3-dehydroquinase region spans residues 1071–1296 (LTYPDVTQSF…AAPGQLSFKQ (226 aa)). Residue histidine 1198 is the Proton acceptor; for 3-dehydroquinate dehydratase activity of the active site. Lysine 1226 serves as the catalytic Schiff-base intermediate with substrate; for 3-dehydroquinate dehydratase activity. The tract at residues 1309–1606 (AQRFYLFGTP…QFVFEEECES (298 aa)) is shikimate dehydrogenase.

This sequence in the N-terminal section; belongs to the sugar phosphate cyclases superfamily. Dehydroquinate synthase family. The protein in the 2nd section; belongs to the EPSP synthase family. It in the 3rd section; belongs to the shikimate kinase family. In the 4th section; belongs to the type-I 3-dehydroquinase family. This sequence in the C-terminal section; belongs to the shikimate dehydrogenase family. In terms of assembly, homodimer. The cofactor is Zn(2+).

The protein localises to the cytoplasm. The enzyme catalyses 7-phospho-2-dehydro-3-deoxy-D-arabino-heptonate = 3-dehydroquinate + phosphate. It carries out the reaction 3-dehydroquinate = 3-dehydroshikimate + H2O. It catalyses the reaction shikimate + NADP(+) = 3-dehydroshikimate + NADPH + H(+). The catalysed reaction is shikimate + ATP = 3-phosphoshikimate + ADP + H(+). The enzyme catalyses 3-phosphoshikimate + phosphoenolpyruvate = 5-O-(1-carboxyvinyl)-3-phosphoshikimate + phosphate. The protein operates within metabolic intermediate biosynthesis; chorismate biosynthesis; chorismate from D-erythrose 4-phosphate and phosphoenolpyruvate: step 2/7. Its pathway is metabolic intermediate biosynthesis; chorismate biosynthesis; chorismate from D-erythrose 4-phosphate and phosphoenolpyruvate: step 3/7. It participates in metabolic intermediate biosynthesis; chorismate biosynthesis; chorismate from D-erythrose 4-phosphate and phosphoenolpyruvate: step 4/7. It functions in the pathway metabolic intermediate biosynthesis; chorismate biosynthesis; chorismate from D-erythrose 4-phosphate and phosphoenolpyruvate: step 5/7. The protein operates within metabolic intermediate biosynthesis; chorismate biosynthesis; chorismate from D-erythrose 4-phosphate and phosphoenolpyruvate: step 6/7. The AROM polypeptide catalyzes 5 consecutive enzymatic reactions in prechorismate polyaromatic amino acid biosynthesis. The protein is Pentafunctional AROM polypeptide of Laccaria bicolor (strain S238N-H82 / ATCC MYA-4686) (Bicoloured deceiver).